The following is a 518-amino-acid chain: Nitrogenase iron-iron protein alpha chain (518 aa).

[8Fe-7S] cluster-binding residues include Cys49, Cys75, and Cys138. 2 residues coordinate [8Fe-9S-C-homocitryl] cluster: Cys257 and His423.

This sequence belongs to the NifD/NifK/NifE/NifN family. In terms of assembly, hexamer of two alpha, two beta, and two delta chains. It depends on [8Fe-7S] cluster as a cofactor. The cofactor is [8Fe-9S-C-homocitryl] cluster.

It carries out the reaction N2 + 8 reduced [2Fe-2S]-[ferredoxin] + 16 ATP + 16 H2O = H2 + 8 oxidized [2Fe-2S]-[ferredoxin] + 2 NH4(+) + 16 ADP + 16 phosphate + 6 H(+). This iron-iron protein is part of the nitrogenase complex that catalyzes the key enzymatic reactions in nitrogen fixation. Other nitrogenase complexes utilize a molybdenum-iron protein or a vanadium-iron protein. The sequence is that of Nitrogenase iron-iron protein alpha chain (anfD) from Azotobacter vinelandii.